The chain runs to 210 residues: uncharacterized protein (210 aa).

Over residues 101–114 (QELPEPSSPQSQSS) the composition is skewed to low complexity. Residues 101 to 166 (QELPEPSSPQ…SSGVSSDLQK (66 aa)) are disordered. Residues 147 to 164 (RSTSPVTASTSSGVSSDL) show a composition bias toward polar residues.

This is an uncharacterized protein from Alcelaphine herpesvirus 1 (strain C500) (AlHV-1).